The chain runs to 427 residues: Enolase (427 aa).

Gln-163 is a binding site for (2R)-2-phosphoglycerate. Glu-205 acts as the Proton donor in catalysis. 3 residues coordinate Mg(2+): Asp-242, Glu-285, and Asp-312. Residues Lys-337, Arg-366, Ser-367, and Lys-388 each contribute to the (2R)-2-phosphoglycerate site. Catalysis depends on Lys-337, which acts as the Proton acceptor.

It belongs to the enolase family. Mg(2+) serves as cofactor.

The protein resides in the cytoplasm. Its subcellular location is the secreted. It localises to the cell surface. It carries out the reaction (2R)-2-phosphoglycerate = phosphoenolpyruvate + H2O. It participates in carbohydrate degradation; glycolysis; pyruvate from D-glyceraldehyde 3-phosphate: step 4/5. Functionally, catalyzes the reversible conversion of 2-phosphoglycerate (2-PG) into phosphoenolpyruvate (PEP). It is essential for the degradation of carbohydrates via glycolysis. The sequence is that of Enolase from Ralstonia nicotianae (strain ATCC BAA-1114 / GMI1000) (Ralstonia solanacearum).